We begin with the raw amino-acid sequence, 260 residues long: Small ribosomal subunit protein eS1 (260 aa).

Positions 1–18 are enriched in basic residues; it reads MAVGKNKRISKGKKGGKK. The disordered stretch occupies residues 1 to 22; it reads MAVGKNKRISKGKKGGKKKAAD.

This sequence belongs to the eukaryotic ribosomal protein eS1 family. In terms of assembly, component of the small ribosomal subunit. Mature ribosomes consist of a small (40S) and a large (60S) subunit. The 40S subunit contains about 33 different proteins and 1 molecule of RNA (18S). The 60S subunit contains about 49 different proteins and 3 molecules of RNA (25S, 5.8S and 5S).

It is found in the cytoplasm. In Helianthus annuus (Common sunflower), this protein is Small ribosomal subunit protein eS1.